A 90-amino-acid chain; its full sequence is Probable Fe(2+)-trafficking protein (90 aa).

This sequence belongs to the Fe(2+)-trafficking protein family.

In terms of biological role, could be a mediator in iron transactions between iron acquisition and iron-requiring processes, such as synthesis and/or repair of Fe-S clusters in biosynthetic enzymes. The polypeptide is Probable Fe(2+)-trafficking protein (Haemophilus influenzae (strain 86-028NP)).